The following is a 247-amino-acid chain: Lipoprotein-releasing system ATP-binding protein LolD 2 (247 aa).

The region spanning 19-247 (LEARKLVKSY…QDGRLQACGG (229 aa)) is the ABC transporter domain. Residue 56–63 (GASGSGKT) participates in ATP binding.

It belongs to the ABC transporter superfamily. Lipoprotein translocase (TC 3.A.1.125) family. In terms of assembly, the complex is composed of two ATP-binding proteins (LolD) and two transmembrane proteins (LolC and LolE).

It localises to the cell inner membrane. Part of the ABC transporter complex LolCDE involved in the translocation of mature outer membrane-directed lipoproteins, from the inner membrane to the periplasmic chaperone, LolA. Responsible for the formation of the LolA-lipoprotein complex in an ATP-dependent manner. The polypeptide is Lipoprotein-releasing system ATP-binding protein LolD 2 (Chlorobaculum tepidum (strain ATCC 49652 / DSM 12025 / NBRC 103806 / TLS) (Chlorobium tepidum)).